The following is an 881-amino-acid chain: Putative SWI/SNF-related matrix-associated actin-dependent regulator of chromatin subfamily A member 3-like 1 (881 aa).

One can recognise a Helicase ATP-binding domain in the interval 272 to 486 (DKRPDPLRGG…YSLMAFLRFE (215 aa)). 285–292 (DDMGLGKT) contributes to the ATP binding site. A disordered region spans residues 308–343 (STSTPTEEPLDGEGDKIEKKGKKRGRGKSSESVTRK). Positions 437–440 (DEAH) match the DEAH box motif. The RING-type zinc-finger motif lies at 635–674 (CPICISPPTNIIITRCAHIFCRACILQTLQRSKPLCPLCR). Positions 681-703 (DLYNAPPPPPDSSNTDGEDAKSS) are disordered. A Helicase C-terminal domain is found at 711–876 (ALLSLLMASR…EREVNVEDVV (166 aa)).

Belongs to the SNF2/RAD54 helicase family. RAD16 subfamily.

It localises to the nucleus. In terms of biological role, possesses intrinsic ATP-dependent nucleosome-remodeling activity. This activity may be required for transcriptional activation or repression of specific target promoters. The protein is Putative SWI/SNF-related matrix-associated actin-dependent regulator of chromatin subfamily A member 3-like 1 of Arabidopsis thaliana (Mouse-ear cress).